The sequence spans 927 residues: Probable UDP-N-acetylglucosamine--peptide N-acetylglucosaminyltransferase SPINDLY (927 aa).

Residues 1–31 (MGRPGMDSSEGRESNGVVPERNGGAVPAKQQ) are disordered. 11 TPR repeats span residues 34–67 (GKDTLRYANILRSRNKFAEALQLYNNVLEKDEAN), 68–101 (VEALIGKGICLQAQSLPMQAIECFNEAVRIDPGN), 102–135 (ACALTYCGMIYKDEGHLVEAAEAYQKARNADPSY), 143–176 (AIVLTDLGTSLKLAGNTEEGIQKYCEALEVDSHY), 177–210 (APAYYNLGVVYSEMMQFDLALTCYEKAALERPLY), 211–244 (AEAYCNMGVIYKNRGELEAAIACYERCLTISPNF), 252–285 (AIALTDLGTKVKIEGDINQGVAYYKKALFYNWHY), 286–319 (ADAMYNLGVAYGEMLNFEMAIVFYELALHFNPRC), 320–353 (AEACNNLGVIYKDRDNLDKAVECYQMALSIKPNF), 355–387 (QSLNNLGVVYTVQGKMDAASSMIQKAIFANSTY), and 388–421 (AEAYNNLGVLYRDAGSITSAVQAYEKCLQIDPDS). Residues 422–927 (RNAGQNRLLA…KVEANGHISR (506 aa)) form a catalytic region region.

Belongs to the glycosyltransferase 41 family. O-GlcNAc transferase subfamily.

It is found in the nucleus. The catalysed reaction is L-seryl-[protein] + UDP-N-acetyl-alpha-D-glucosamine = 3-O-(N-acetyl-beta-D-glucosaminyl)-L-seryl-[protein] + UDP + H(+). It catalyses the reaction L-threonyl-[protein] + UDP-N-acetyl-alpha-D-glucosamine = 3-O-(N-acetyl-beta-D-glucosaminyl)-L-threonyl-[protein] + UDP + H(+). The protein operates within protein modification; protein glycosylation. Its function is as follows. Probable O-linked N-acetylglucosamine transferase (OGT) involved in various processes such as gibberellin (GA) signaling pathway. OGTs catalyze the addition of nucleotide-activated sugars directly onto the polypeptide through O-glycosidic linkage with the hydroxyl of serine or threonine. Probably acts by adding O-linked sugars to yet unknown proteins. In Oryza sativa subsp. japonica (Rice), this protein is Probable UDP-N-acetylglucosamine--peptide N-acetylglucosaminyltransferase SPINDLY (SPY).